The sequence spans 291 residues: 4-hydroxy-tetrahydrodipicolinate synthase (291 aa).

Position 45 (threonine 45) interacts with pyruvate. Tyrosine 133 functions as the Proton donor/acceptor in the catalytic mechanism. Lysine 161 functions as the Schiff-base intermediate with substrate in the catalytic mechanism. Isoleucine 203 is a pyruvate binding site.

It belongs to the DapA family. In terms of assembly, homotetramer; dimer of dimers.

It is found in the cytoplasm. It carries out the reaction L-aspartate 4-semialdehyde + pyruvate = (2S,4S)-4-hydroxy-2,3,4,5-tetrahydrodipicolinate + H2O + H(+). It functions in the pathway amino-acid biosynthesis; L-lysine biosynthesis via DAP pathway; (S)-tetrahydrodipicolinate from L-aspartate: step 3/4. In terms of biological role, catalyzes the condensation of (S)-aspartate-beta-semialdehyde [(S)-ASA] and pyruvate to 4-hydroxy-tetrahydrodipicolinate (HTPA). This is 4-hydroxy-tetrahydrodipicolinate synthase from Acidithiobacillus ferrooxidans (strain ATCC 23270 / DSM 14882 / CIP 104768 / NCIMB 8455) (Ferrobacillus ferrooxidans (strain ATCC 23270)).